The sequence spans 208 residues: Sodium/potassium-transporting ATPase subunit beta-1-interacting protein 2 (208 aa).

4 helical membrane passes run M1–E23, A35–I55, G64–L84, and V148–V168.

Belongs to the NKAIN family. As to quaternary structure, interacts with ATP1B1. In terms of tissue distribution, detected in the brain only and specifically in neurons; expressed in multiple regions such as cerebral cortex, thalamus, cerebellum, olfactory bulb and brainstem, but not in the hippocampus.

Its subcellular location is the cell membrane. This is Sodium/potassium-transporting ATPase subunit beta-1-interacting protein 2 (Nkain2) from Mus musculus (Mouse).